We begin with the raw amino-acid sequence, 161 residues long: Nucleotide-binding protein SO_3815 (161 aa).

The protein belongs to the YajQ family.

Nucleotide-binding protein. The protein is Nucleotide-binding protein SO_3815 of Shewanella oneidensis (strain ATCC 700550 / JCM 31522 / CIP 106686 / LMG 19005 / NCIMB 14063 / MR-1).